The sequence spans 555 residues: CD166 antigen homolog (555 aa).

An N-terminal signal peptide occupies residues 1 to 22 (MQSVVCLIGAFIAAAVFRPGSC). Ig-like V-type domains lie at 23–127 (VGTV…EVKV) and 131–229 (PSAP…DQVS). Over 23-499 (VGTVIGLYGE…NEDGTEQAKV (477 aa)) the chain is Extracellular. Cystine bridges form between Cys-38–Cys-110, Cys-154–Cys-217, and Cys-263–Cys-306. 2 N-linked (GlcNAc...) asparagine glycosylation sites follow: Asn-92 and Asn-171. Ig-like C2-type domains lie at 239-323 (PTEK…VTVS), 319-397 (FVTV…RSLS), and 406-484 (PKIT…KEIS). Residues Asn-350, Asn-441, and Asn-465 are each glycosylated (N-linked (GlcNAc...) asparagine). An intrachain disulfide couples Cys-426 to Cys-470. The helical transmembrane segment at 500–520 (IVGIVVGLLVAAALVGLIYWI) threads the bilayer. Residues 521–555 (YIKKTRQGSWKTGEKEAGTSEESKKLEENNHKPDV) lie on the Cytoplasmic side of the membrane. The tract at residues 529-555 (SWKTGEKEAGTSEESKKLEENNHKPDV) is disordered. Residues 532-555 (TGEKEAGTSEESKKLEENNHKPDV) are compositionally biased toward basic and acidic residues.

Homodimer. Interacts (via extracellular domain) with CD6 (via extracellular domain). Homodimerization and interaction with CD6 involve the same region and cannot occur simultaneously. The affinity for CD6 is much higher than the affinity for self-association. In terms of tissue distribution, present on all retinal ganglion cells (RGCS) and their axons (in embryo). Absent from mature axons along most of their length, but is present on new and growing axons derived from the RGCS at the retinal margin. Remains on adult RGCS only at cell-cell contact sites and is continuously found in the retinal axon terminal arbor layers of the adult tectum.

Its subcellular location is the cell membrane. It is found in the cell projection. The protein localises to the axon. It localises to the dendrite. In terms of biological role, cell adhesion molecule that mediates both heterotypic cell-cell contacts via its interaction with CD6, as well as homotypic cell-cell contacts. Promotes T-cell activation and proliferation via its interactions with CD6. Contributes to the formation and maturation of the immunological synapse via its interactions with CD6. Mediates homotypic interactions with cells that express ALCAM. Mediates attachment of dendritic cells onto endothelial cells via homotypic interaction. Inhibits endothelial cell migration and promotes endothelial tube formation via homotypic interactions. Required for normal organization of the lymph vessel network. Required for normal hematopoietic stem cell engraftment in the bone marrow. Plays a role in hematopoiesis; required for normal numbers of hematopoietic stem cells in bone marrow. Promotes in vitro osteoblast proliferation and differentiation. Promotes neurite extension, axon growth and axon guidance; axons grow preferentially on surfaces that contain ALCAM. Mediates outgrowth and pathfinding for retinal ganglion cell axons. The polypeptide is CD166 antigen homolog (alcam) (Carassius auratus (Goldfish)).